A 505-amino-acid chain; its full sequence is Catalase (505 aa).

Residues 1–25 (MSRQDKKLTGVFGHPVSDRENSMTA) form a disordered region. Catalysis depends on residues histidine 56 and asparagine 129. Residue tyrosine 339 coordinates heme.

It belongs to the catalase family. Homodimer. Heme serves as cofactor.

The enzyme catalyses 2 H2O2 = O2 + 2 H2O. Its function is as follows. Decomposes hydrogen peroxide into water and oxygen; serves to protect cells from the toxic effects of hydrogen peroxide. This Staphylococcus aureus (strain MRSA252) protein is Catalase (katA).